Here is a 23-residue protein sequence, read N- to C-terminus: U3-ctenitoxin-Co1a (23 aa).

2 cysteine pairs are disulfide-bonded: C2–C17 and C9–C22.

As to expression, expressed by the venom gland.

The protein localises to the secreted. Its function is as follows. Antagonist of L-type calcium channels (Cav1/CACNA1). The sequence is that of U3-ctenitoxin-Co1a from Ctenus ornatus (Brazilian spider).